The sequence spans 426 residues: 3-phosphoshikimate 1-carboxyvinyltransferase (426 aa).

Residues Lys-22, Ser-23, and Arg-27 each coordinate 3-phosphoshikimate. Phosphoenolpyruvate is bound at residue Lys-22. Phosphoenolpyruvate-binding residues include Gly-96 and Arg-124. 3-phosphoshikimate-binding residues include Ser-170, Ser-171, Gln-172, Ser-198, Asp-314, Asn-337, and Lys-341. Gln-172 is a phosphoenolpyruvate binding site. The active-site Proton acceptor is the Asp-314. 3 residues coordinate phosphoenolpyruvate: Arg-345, Arg-387, and Lys-412.

Belongs to the EPSP synthase family. As to quaternary structure, monomer.

It localises to the cytoplasm. It catalyses the reaction 3-phosphoshikimate + phosphoenolpyruvate = 5-O-(1-carboxyvinyl)-3-phosphoshikimate + phosphate. It functions in the pathway metabolic intermediate biosynthesis; chorismate biosynthesis; chorismate from D-erythrose 4-phosphate and phosphoenolpyruvate: step 6/7. Its function is as follows. Catalyzes the transfer of the enolpyruvyl moiety of phosphoenolpyruvate (PEP) to the 5-hydroxyl of shikimate-3-phosphate (S3P) to produce enolpyruvyl shikimate-3-phosphate and inorganic phosphate. The polypeptide is 3-phosphoshikimate 1-carboxyvinyltransferase (Aliivibrio fischeri (strain MJ11) (Vibrio fischeri)).